The following is a 406-amino-acid chain: Imidazolonepropionase (406 aa).

Fe(3+)-binding residues include His65 and His67. The Zn(2+) site is built by His65 and His67. 4-imidazolone-5-propanoate contacts are provided by Arg74, Tyr137, and His170. Tyr137 contacts N-formimidoyl-L-glutamate. Fe(3+) is bound at residue His235. His235 provides a ligand contact to Zn(2+). Gln238 is a binding site for 4-imidazolone-5-propanoate. Asp310 is a Fe(3+) binding site. Asp310 is a Zn(2+) binding site. Positions 312 and 314 each coordinate N-formimidoyl-L-glutamate. Thr315 is a binding site for 4-imidazolone-5-propanoate.

This sequence belongs to the metallo-dependent hydrolases superfamily. HutI family. Zn(2+) serves as cofactor. Requires Fe(3+) as cofactor.

The protein localises to the cytoplasm. The catalysed reaction is 4-imidazolone-5-propanoate + H2O = N-formimidoyl-L-glutamate. It functions in the pathway amino-acid degradation; L-histidine degradation into L-glutamate; N-formimidoyl-L-glutamate from L-histidine: step 3/3. Functionally, catalyzes the hydrolytic cleavage of the carbon-nitrogen bond in imidazolone-5-propanoate to yield N-formimidoyl-L-glutamate. It is the third step in the universal histidine degradation pathway. The polypeptide is Imidazolonepropionase (Vibrio vulnificus (strain YJ016)).